Consider the following 315-residue polypeptide: Eukaryotic translation initiation factor 2 subunit 1 (315 aa).

Positions 17-88 constitute an S1 motif domain; sequence EDVVMVNVRS…EKGYIDLSKR (72 aa). Residue serine 49 is modified to Phosphoserine; by HRI. Serine 52 is subject to Phosphoserine. Lysine 141 is modified (N6-acetyllysine). A Phosphoserine modification is found at serine 158. 2 positions are modified to phosphothreonine: threonine 279 and threonine 281. Residues 293 to 315 form a disordered region; it reads LERENAEVDGDDDAEEMEAKAED. Over residues 299–308 the composition is skewed to acidic residues; sequence EVDGDDDAEE.

The protein belongs to the eIF-2-alpha family. In terms of assembly, eukaryotic translation initiation factor 2 eIF2 is a heterotrimeric complex composed of an alpha (EIF2S1), a beta (EIF2S2) and a gamma (EIF2S3) chain. eIF2 is member of the 43S pre-initiation complex (43S PIC). eIF2 forms a complex with at least CELF1/CUGBP1, CALR, CALR3, EIF2S1, EIF2S2, HSP90B1 and HSPA5. Interaction with METAP2 protects EIF2S1 from inhibitory phosphorylation. Interacts with ABCF1 isoform 2. Associates with ribosomes. Interacts with DDX3X in an RNA-independent manner. Interacts with CDC123. As to quaternary structure, (Microbial infection) Interacts with rotavirus A non-structural protein 2; this interaction probably plays a role in the sequestration of IF2A in viral factories. Interacts with rotavirus A non-structural protein 5; this interaction probably plays a role in its sequestration in viral factories. Post-translationally, phosphorylation at Ser-49 and Ser-52 stabilizes the eIF-2/GDP/eIF2B complex and prevents GDP/GTP exchange reaction, thus impairing the recycling of eIF-2 between successive rounds of initiation and leading to global inhibition of translation, while concomitantly initiating the preferential translation of integrated stress response (ISR)-specific mRNAs. Substrate for at least 4 kinases: EIF2AK1/HRI, EIF2AK2/PKR, EIF2AK3/PERK and EIF2AK4/GCN2. Phosphorylation on Ser-52 by the EIF2AK4/GCN2 protein kinase occurs in response to amino acid starvation and UV irradiation. Phosphorylation at Ser-52 by the EIF2AK3/PERK protein kinase occurs in response to the unfolded protein response. Phosphorylation at Ser-52 by EIF2AK1/HRI in response to mitochondrial damage promotes relocalization to the mitochondrial surface. In terms of processing, (Microbial infection) Phosphorylation by vaccinia virus protein E3 and rotavirus A stabilizes the eIF-2/GDP/eIF2B complex and prevents GDP/GTP exchange reaction, thus impairing the recycling of eIF-2 between successive rounds of initiation and leading to global inhibition of translation.

It is found in the cytoplasm. Its subcellular location is the stress granule. It localises to the cytosol. The protein resides in the mitochondrion. Its activity is regulated as follows. Activity is regulated by phosphorylation at Ser-49 and Ser-52, which stabilizes the eIF2/GDP/eIF2B complex and prevents the eIF2B-mediated exchange of GDP for GTP, thereby preventing the formation of the 43S pre-initiation complex (43S PIC). This results in the global attenuation of 5' cap-dependent protein synthesis and concomitant translation of ISR-specific mRNAs that contain a short upstream open reading frame (uORF) in their 5' UTR, such as ATF4, ATF5, DDIT3/CHOP and PPP1R15A/GADD34. In terms of biological role, member of the eIF2 complex that functions in the early steps of protein synthesis by forming a ternary complex with GTP and initiator tRNA. This complex binds to a 40S ribosomal subunit, followed by mRNA binding to form a 43S pre-initiation complex (43S PIC). Junction of the 60S ribosomal subunit to form the 80S initiation complex is preceded by hydrolysis of the GTP bound to eIF2 and release of an eIF2-GDP binary complex. In order for eIF2 to recycle and catalyze another round of initiation, the GDP bound to eIF2 must exchange with GTP by way of a reaction catalyzed by eIF2B. EIF2S1/eIF2-alpha is a key component of the integrated stress response (ISR), required for adaptation to various stress: phosphorylation by metabolic-stress sensing protein kinases (EIF2AK1/HRI, EIF2AK2/PKR, EIF2AK3/PERK and EIF2AK4/GCN2) in response to stress converts EIF2S1/eIF2-alpha in a global protein synthesis inhibitor, leading to an attenuation of cap-dependent translation, while concomitantly initiating the preferential translation of ISR-specific mRNAs, such as the transcriptional activators ATF4 and QRICH1, and hence allowing ATF4- and QRICH1-mediated reprogramming. EIF2S1/eIF2-alpha also acts as an activator of mitophagy in response to mitochondrial damage: phosphorylation by EIF2AK1/HRI promotes relocalization to the mitochondrial surface, thereby triggering PRKN-independent mitophagy. The sequence is that of Eukaryotic translation initiation factor 2 subunit 1 from Homo sapiens (Human).